A 389-amino-acid chain; its full sequence is Chalcone synthase 1 (389 aa).

Residue Cys164 is part of the active site.

Belongs to the thiolase-like superfamily. Chalcone/stilbene synthases family.

It catalyses the reaction (E)-4-coumaroyl-CoA + 3 malonyl-CoA + 3 H(+) = 2',4,4',6'-tetrahydroxychalcone + 3 CO2 + 4 CoA. The protein operates within secondary metabolite biosynthesis; flavonoid biosynthesis. Its function is as follows. The primary product of this enzyme is 4,2',4',6'-tetrahydroxychalcone (also termed naringenin-chalcone or chalcone) which can under specific conditions spontaneously isomerize into naringenin. This is Chalcone synthase 1 (CHS1) from Cicer arietinum (Chickpea).